The primary structure comprises 444 residues: Protein EVI2B (444 aa).

The N-terminal stretch at 1–23 (MEFKYLVFIVLCQYLDNTFFSET) is a signal peptide. Residues 24-203 (EAITTEQQSL…GTAHKNNHNA (180 aa)) are Extracellular-facing. N-linked (GlcNAc...) asparagine glycans are attached at residues Asn-63, Asn-94, Asn-104, and Asn-127. Polar residues-rich tracts occupy residues 104–131 (NNSLPQTSPSGFTLTNQPSPSTYNSTGQ) and 160–171 (THNQPTKSTPTI). The tract at residues 104–197 (NNSLPQTSPS…EPPSGKGTAH (94 aa)) is disordered. A compositionally biased stretch (pro residues) spans 177–187 (TPPPPPPPLTS). The helical transmembrane segment at 204 to 224 (IAAILIGTIIISMLVAILMII) threads the bilayer. Topologically, residues 225–444 (LWKYLRKPVL…SLPPPPTELL (220 aa)) are cytoplasmic. Thr-250 carries the phosphothreonine modification. A phosphoserine mark is found at Ser-269, Ser-272, Ser-279, and Ser-295. Polar residues-rich tracts occupy residues 318 to 332 (SEDSADGSTVGTAVS) and 361 to 370 (SPLPNDSINP). Disordered stretches follow at residues 318–337 (SEDSADGSTVGTAVSSDDAD) and 361–444 (SPLP…TELL).

As to expression, expressed in myeloid and lymphoid progenitors and increased in mature hematopoietic populations with the highest levels in granulocytes.

It localises to the membrane. Required for granulocyte differentiation and functionality of hematopoietic progenitor cells through the control of cell cycle progression and survival of hematopoietic progenitor cells. The protein is Protein EVI2B of Mus musculus (Mouse).